A 787-amino-acid chain; its full sequence is (-)-kolavenyl diphosphate synthase, chloroplastic (787 aa).

The N-terminal 47 residues, 1-47 (MSFATSLPRPTTTGAAGFGLPLATCISLSVSHSFSPKFGICNNTSLR), are a transit peptide targeting the chloroplast. Lysine 237 is a binding site for substrate. The Mg(2+) site is built by aspartate 368 and aspartate 370. A DXDD motif motif is present at residues 368–371 (DSDD). A substrate-binding site is contributed by lysine 454.

Belongs to the terpene synthase family. Tpsc subfamily. Requires Mg(2+) as cofactor. In terms of tissue distribution, expressed in peltate glandular trichomes of leaves. Highly expressed in the first leaf pair.

Its subcellular location is the plastid. The protein resides in the chloroplast. The enzyme catalyses (2E,6E,10E)-geranylgeranyl diphosphate = (-)-kolavenyl diphosphate. Inhibited by high concentrations of magnesium. Functionally, involved in the biosynthesis of clerodane diterpenoids natural products, including salvinorin A with potent agonistic activity on brain kappa-opioid receptors, thus conferring hallucinogenic properties. Diterpene synthase that catalyzes the formation of (-)-kolavenyl diphosphate from geranylgeranyl diphosphate (GGPP) as the first reaction in salvinorin A biosynthesis. The protein is (-)-kolavenyl diphosphate synthase, chloroplastic of Salvia divinorum (Maria pastora).